The primary structure comprises 305 residues: Serine/threonine-protein phosphatase 6 catalytic subunit (305 aa).

At M1 the chain carries N-acetylmethionine. Residues D53, H55, D81, and N113 each coordinate Mn(2+). H114 acts as the Proton donor in catalysis. Mn(2+)-binding residues include H163 and H237.

The protein belongs to the PPP phosphatase family. PP-6 (PP-V) subfamily. As to quaternary structure, protein phosphatase 6 (PP6) holoenzyme is proposed to be a heterotrimeric complex formed by the catalytic subunit, a SAPS domain-containing subunit (PP6R) and an ankyrin repeat-domain containing regulatory subunit (ARS). Interacts with subunits PPP6R1, PPP6R2 and PPP6R3. Interacts with subunit ANKRD28. Interacts with IGBP1. Interacts with MAP3K7. Interacts with NFKBIE. Interacts with TRIM14 and WRNIP1; these interactions positively regulate the RIG-I signaling pathway. Mn(2+) is required as a cofactor. As to expression, ubiquitously expressed in all tissues tested with strongest expression in lung, spleen, liver, kidney and brain. Weaker expression observed in bladder, pancreas, heart and skeletal muscle.

The protein resides in the mitochondrion. It localises to the cytoplasm. It catalyses the reaction O-phospho-L-seryl-[protein] + H2O = L-seryl-[protein] + phosphate. The enzyme catalyses O-phospho-L-threonyl-[protein] + H2O = L-threonyl-[protein] + phosphate. Its function is as follows. Catalytic subunit of protein phosphatase 6 (PP6). PP6 is a component of a signaling pathway regulating cell cycle progression in response to IL2 receptor stimulation. N-terminal domain restricts G1 to S phase progression in cancer cells, in part through control of cyclin D13 During mitosis, regulates spindle positioning. Down-regulates MAP3K7 kinase activation of the IL1 signaling pathway by dephosphorylation of MAP3K7. Acts as a regulator of innate immunity by mediating dephosphorylation CGAS, STING1 and RIGI. Also participates in the innate immune defense against viruses by desphosphorylating RIGI, an essential step that triggers RIGI-mediated signaling activation. Also regulates innate immunity by acting as a negative regulator of the cGAS-STING pathway: mediates dephosphorylation and inactivation of CGAS and STING1. CGAS dephosphorylation at 'Ser-420' impairs its ability to bind GTP, thereby inactivating it. This chain is Serine/threonine-protein phosphatase 6 catalytic subunit, found in Mus musculus (Mouse).